The following is a 21-amino-acid chain: AILELPQSPNVFHPEKPSAVG.

Positions 1 to 21 (AILELPQSPNVFHPEKPSAVG) are disordered.

It localises to the cytoplasm. In terms of biological role, component of the cytoplasmic filaments that run the length of the organism just underneath the cytoplasmic membrane. This chain is Cytoplasmic filament protein A (cfpA), found in Treponema phagedenis.